We begin with the raw amino-acid sequence, 201 residues long: HTH-type transcriptional regulator Hpr (201 aa).

The HTH marR-type domain occupies Ala-13–Gly-157. The H-T-H motif DNA-binding region spans Ile-63–Glu-86.

Homodimer.

Its function is as follows. Negative regulator of protease production and sporulation. This Geobacillus sp. (strain WCH70) protein is HTH-type transcriptional regulator Hpr.